Reading from the N-terminus, the 168-residue chain is Monothiol glutaredoxin-S7, chloroplastic (168 aa).

The transit peptide at 1–54 (MAATAAASVAAISPLPGASLPRPVSARVPLLPRASPPTWRLSVGSARARSTRCL) directs the protein to the chloroplast. In terms of domain architecture, Glutaredoxin spans 67 to 168 (RATLDKVVGS…QETLEKAMLS (102 aa)). Residue Lys84 coordinates glutathione. Cys92 contributes to the [2Fe-2S] cluster binding site. Glutathione is bound by residues Arg121, Phe133, and 146-147 (CD).

This sequence belongs to the glutaredoxin family. CGFS subfamily.

It is found in the plastid. The protein resides in the chloroplast. May only reduce GSH-thiol disulfides, but not protein disulfides. This chain is Monothiol glutaredoxin-S7, chloroplastic (GRXS7), found in Oryza sativa subsp. japonica (Rice).